A 172-amino-acid polypeptide reads, in one-letter code: Ribosome maturation factor RimM (172 aa).

In terms of domain architecture, PRC barrel spans 96 to 168 (DGEFYYHEII…RIEVELMEGL (73 aa)).

Belongs to the RimM family. As to quaternary structure, binds ribosomal protein uS19.

It localises to the cytoplasm. In terms of biological role, an accessory protein needed during the final step in the assembly of 30S ribosomal subunit, possibly for assembly of the head region. Essential for efficient processing of 16S rRNA. May be needed both before and after RbfA during the maturation of 16S rRNA. It has affinity for free ribosomal 30S subunits but not for 70S ribosomes. The protein is Ribosome maturation factor RimM of Streptococcus thermophilus (strain ATCC BAA-491 / LMD-9).